A 444-amino-acid chain; its full sequence is Tol-Pal system protein TolB (444 aa).

Positions 1–19 (MRNIIYFILSLLFSVTSYA) are cleaved as a signal peptide.

It belongs to the TolB family. As to quaternary structure, the Tol-Pal system is composed of five core proteins: the inner membrane proteins TolA, TolQ and TolR, the periplasmic protein TolB and the outer membrane protein Pal. They form a network linking the inner and outer membranes and the peptidoglycan layer.

Its subcellular location is the periplasm. Part of the Tol-Pal system, which plays a role in outer membrane invagination during cell division and is important for maintaining outer membrane integrity. This Rickettsia rickettsii (strain Sheila Smith) protein is Tol-Pal system protein TolB.